The following is a 142-amino-acid chain: Large ribosomal subunit protein uL13 (142 aa).

The protein belongs to the universal ribosomal protein uL13 family. In terms of assembly, part of the 50S ribosomal subunit.

Its function is as follows. This protein is one of the early assembly proteins of the 50S ribosomal subunit, although it is not seen to bind rRNA by itself. It is important during the early stages of 50S assembly. The chain is Large ribosomal subunit protein uL13 from Klebsiella pneumoniae (strain 342).